The chain runs to 861 residues: Leucine--tRNA ligase (861 aa).

The 'HIGH' region motif lies at 42–52 (PYPSGKLHMGH). The short motif at 619–623 (KMSKS) is the 'KMSKS' region element. Lys-622 contacts ATP.

The protein belongs to the class-I aminoacyl-tRNA synthetase family.

The protein resides in the cytoplasm. It carries out the reaction tRNA(Leu) + L-leucine + ATP = L-leucyl-tRNA(Leu) + AMP + diphosphate. In Actinobacillus pleuropneumoniae serotype 5b (strain L20), this protein is Leucine--tRNA ligase.